The chain runs to 387 residues: Peroxisomal membrane protein LPX1 (387 aa).

The tract at residues 385–387 (QKL) is peroxisomal targeting signal type 1.

The protein resides in the peroxisome matrix. Its function is as follows. Has acyl esterase, lipase and phospholipase A activity. The protein is Peroxisomal membrane protein LPX1 (LPX1) of Saccharomyces cerevisiae (strain ATCC 204508 / S288c) (Baker's yeast).